Here is a 498-residue protein sequence, read N- to C-terminus: Argininosuccinate lyase 1 (498 aa).

It belongs to the lyase 1 family. Argininosuccinate lyase subfamily.

The protein localises to the cytoplasm. It catalyses the reaction 2-(N(omega)-L-arginino)succinate = fumarate + L-arginine. It functions in the pathway amino-acid biosynthesis; L-arginine biosynthesis; L-arginine from L-ornithine and carbamoyl phosphate: step 3/3. The chain is Argininosuccinate lyase 1 from Shouchella clausii (strain KSM-K16) (Alkalihalobacillus clausii).